The chain runs to 395 residues: S-adenosylmethionine synthase (395 aa).

Position 16 (His16) interacts with ATP. Asp18 contributes to the Mg(2+) binding site. Glu44 contributes to the K(+) binding site. 2 residues coordinate L-methionine: Glu57 and Gln100. Residues 100–110 are flexible loop; it reads QSPDIAGGVNL. ATP contacts are provided by residues 175-177, 242-243, Asp251, 257-258, Ala274, and Lys278; these read DGK, RF, and RK. Asp251 provides a ligand contact to L-methionine. Lys282 contacts L-methionine.

The protein belongs to the AdoMet synthase family. As to quaternary structure, homotetramer; dimer of dimers. Requires Mg(2+) as cofactor. K(+) serves as cofactor.

It localises to the cytoplasm. The catalysed reaction is L-methionine + ATP + H2O = S-adenosyl-L-methionine + phosphate + diphosphate. The protein operates within amino-acid biosynthesis; S-adenosyl-L-methionine biosynthesis; S-adenosyl-L-methionine from L-methionine: step 1/1. Catalyzes the formation of S-adenosylmethionine (AdoMet) from methionine and ATP. The overall synthetic reaction is composed of two sequential steps, AdoMet formation and the subsequent tripolyphosphate hydrolysis which occurs prior to release of AdoMet from the enzyme. This is S-adenosylmethionine synthase from Thermus thermophilus (strain ATCC BAA-163 / DSM 7039 / HB27).